The chain runs to 676 residues: Envelope glycoprotein (676 aa).

The N-terminal stretch at 1-32 is a signal peptide; that stretch reads MEGLSLLQLPRDKFRKSSFFVWVIILFQKAFS. Residues 33 to 650 are Extracellular-facing; the sequence is MPLGVVTNST…DDNWWTGWRQ (618 aa). Asparagine 40 carries N-linked (GlcNAc...) asparagine; by host glycosylation. Cystine bridges form between cysteine 53-cysteine 609, cysteine 108-cysteine 135, cysteine 121-cysteine 147, cysteine 511-cysteine 556, and cysteine 601-cysteine 608. The tract at residues 54–201 is receptor-binding; that stretch reads KDHLASTDQL…TFLQSPPIRE (148 aa). Asparagine 204, asparagine 208, asparagine 238, asparagine 257, asparagine 268, asparagine 296, and asparagine 314 each carry an N-linked (GlcNAc...) asparagine; by host glycan. Positions 305 to 485 are mucin-like region; the sequence is ELSFETLSLN…STSNGLITST (181 aa). Positions 312–351 are disordered; that stretch reads SLNETEDDDATSSRTTKGRISDRATRKYSDLVPKDSPGMV. A compositionally biased stretch (basic and acidic residues) spans 330–344; it reads RISDRATRKYSDLVP. An N-linked (GlcNAc...) asparagine; by host glycan is attached at asparagine 366. The segment at 406-458 is disordered; the sequence is SSSQILSSSPTMAPSPETQTSTTYTPKLPVMTTEEPTTPPRNSPGSTTEAPTL. Composition is skewed to polar residues over residues 415 to 430 and 448 to 458; these read PTMAPSPETQTSTTYT and SPGSTTEAPTL. Residue asparagine 463 is glycosylated (N-linked (GlcNAc...) asparagine; by host). Positions 524–539 are fusion peptide; that stretch reads HNAAGIAWIPYFGPGA. A coiled-coil region spans residues 554–595; the sequence is LVCGLRQLANETTQALQLFLRATTELRTYTILNRKAIDFLLR. The N-linked (GlcNAc...) asparagine; by host glycan is linked to asparagine 563. The stretch at 615–634 forms a coiled coil; the sequence is WTKNITDKINQIIHDFIDNP. Residue asparagine 618 is glycosylated (N-linked (GlcNAc...) asparagine; by host). The helical transmembrane segment at 651-671 threads the bilayer; sequence WIPAGIGITGIIIAIIALLCV. S-palmitoyl cysteine; by host attachment occurs at residues cysteine 670 and cysteine 672. The Cytoplasmic portion of the chain corresponds to 672–676; that stretch reads CKLLC.

The protein belongs to the filoviruses glycoprotein family. Homotrimer; each monomer consists of a GP1 and a GP2 subunit linked by disulfide bonds. The resulting peplomers (GP1,2) protrude from the virus surface as spikes. Interacts with host integrin alpha-V/ITGAV. Interacts with host CLEC10A. Binds also to host CD209 and CLEC4M/DC-SIGN(R). Interacts with host FOLR1. Interacts with BST2; this interaction inhibits the antiviral effect of BST2 and this allows viral release from infected cells. Interacts with host FCN1; this interaction enhances viral entry. Interacts with host TLR4; this interaction induces cell death in T-lymphocytes or proinflammatory cytokines and SOCS1 production in monocytes. As to quaternary structure, interacts with host entry receptor NPC1. In terms of assembly, GP1 and GP2delta are part of GP1,2delta soluble complexes released by ectodomain shedding. The signal peptide region modulates GP's high mannose glycosylation, thereby determining the efficiency of the interactions with DC-SIGN(R). Post-translationally, N-glycosylated. In terms of processing, O-glycosylated in the mucin-like region. Palmitoylation of GP2 is not required for its function. Post-translationally, specific enzymatic cleavages in vivo yield mature proteins. The precursor is processed into GP1 and GP2 by host cell furin in the trans Golgi, and maybe by other host proteases, to yield the mature GP1 and GP2 proteins. The cleavage site corresponds to the furin optimal cleavage sequence [KR]-X-[KR]-R. This cleavage does not seem to be required for function. After the internalization of the virus into cell endosomes, GP1 C-terminus is removed by the endosomal proteases cathepsin B, cathepsin L, or both, leaving a 19-kDa N-terminal fragment which is further digested by cathepsin B. Proteolytic processing of GP1,2 by host ADAM17 can remove the transmembrane anchor of GP2 and leads to shedding of complexes consisting in GP1 and truncated GP2 (GP1,2delta).

The protein localises to the virion membrane. The protein resides in the host cell membrane. Its subcellular location is the secreted. Its function is as follows. Trimeric GP1,2 complexes form the virion surface spikes and mediate the viral entry processes, with GP1 acting as the receptor-binding subunit and GP2 as the membrane fusion subunit. At later times of infection, down-regulates the expression of various host cell surface molecules that are essential for immune surveillance and cell adhesion. Down-modulates several integrins including ITGA1, ITGA2, ITGA3, ITGA4, ITGA5, ITGA6, ITGAV and ITGB1. This decrease in cell adhesion molecules may lead to cell detachment, contributing to the disruption of blood vessel integrity and hemorrhages developed during infection (cytotoxicity). Interacts with host TLR4 and thereby stimulates the differentiation and activation of monocytes leading to bystander death of T-lymphocytes. Down-regulates as well the function of host natural killer cells. Counteracts the antiviral effect of host BST2/tetherin that restricts release of progeny virions from infected cells. However, cooperates with VP40 and host BST2 to activate canonical NF-kappa-B pathway in a manner dependent on neddylation. Functionally, functions as a decoy for anti-GP1,2 antibodies thereby contributing to viral immune evasion. Interacts and activates host macrophages and dendritic cells inducing up-regulation of cytokine transcription. This effect is mediated throught activation of host TLR4. In terms of biological role, responsible for binding to the receptor(s) on target cells. Interacts with CD209/DC-SIGN and CLEC4M/DC-SIGNR which act as cofactors for virus entry into dendritic cells (DCs) and endothelial cells. Binding to the macrophage specific lectin CLEC10A also seems to enhance virus infectivity. Interaction with FOLR1/folate receptor alpha may be a cofactor for virus entry in some cell types, although results are contradictory. Members of the Tyro3 receptor tyrosine kinase family also seem to be cell entry factors in filovirus infection. Once attached, the virions are internalized through clathrin-dependent endocytosis and/or macropinocytosis. After internalization of the virus into the endosomes of the host cell, proteolysis of GP1 by two cysteine proteases, CTSB/cathepsin B and CTSL/cathepsin L removes the glycan cap and allows GP1 binding to the host entry receptor NPC1. NPC1-binding, Ca(2+) and acidic pH induce a conformational change of GP2, which unmasks its fusion peptide and permit membranes fusion. Acts as a class I viral fusion protein. Under the current model, the protein has at least 3 conformational states: pre-fusion native state, pre-hairpin intermediate state, and post-fusion hairpin state. During viral and target cell membrane fusion, the coiled coil regions (heptad repeats) assume a trimer-of-hairpins structure, positioning the fusion peptide in close proximity to the C-terminal region of the ectodomain. The formation of this structure appears to drive apposition and subsequent fusion of viral and target cell membranes. Responsible for penetration of the virus into the cell cytoplasm by mediating the fusion of the membrane of the endocytosed virus particle with the endosomal membrane. Low pH in endosomes induces an irreversible conformational change in GP2, releasing the fusion hydrophobic peptide. This Sudan ebolavirus (strain Maleo-79) (SEBOV) protein is Envelope glycoprotein (GP).